The chain runs to 447 residues: Delta(5) fatty acid desaturase fat-4 (447 aa).

The Cytochrome b5 heme-binding domain occupies 1–80; it reads MVLREQEHEP…TQEPEIPDIK (80 aa). 4 consecutive transmembrane segments (helical) span residues 137–157, 257–277, 292–312, and 319–339; these read IFTILFAFYLQYHTYYLPSAI, WTFMLPFLRLSWLLQSIIFVS, IYEQVGLSLHWAWSLGQLYFL, and IMFFLVSHLVGGFLLSHVVTF.

This sequence belongs to the fatty acid desaturase type 1 family.

It is found in the membrane. It catalyses the reaction (11Z,14Z)-eicosadienoyl-CoA + 2 Fe(II)-[cytochrome b5] + O2 + 2 H(+) = (5Z,11Z,14Z)-eicosatrienoyl-CoA + 2 Fe(III)-[cytochrome b5] + 2 H2O. It carries out the reaction (11Z,14Z,17Z)-eicosatrienoyl-CoA + 2 Fe(II)-[cytochrome b5] + O2 + 2 H(+) = (5Z,11Z,14Z,17Z)-eicosatetraenoyl-CoA + 2 Fe(III)-[cytochrome b5] + 2 H2O. The catalysed reaction is (8Z,11Z,14Z,17Z)-eicosatetraenoyl-CoA + 2 Fe(II)-[cytochrome b5] + O2 + 2 H(+) = (5Z,8Z,11Z,14Z,17Z)-eicosapentaenoyl-CoA + 2 Fe(III)-[cytochrome b5] + 2 H2O. The enzyme catalyses (8Z,11Z,14Z)-eicosatrienoyl-CoA + 2 Fe(II)-[cytochrome b5] + O2 + 2 H(+) = (5Z,8Z,11Z,14Z)-eicosatetraenoyl-CoA + 2 Fe(III)-[cytochrome b5] + 2 H2O. It participates in lipid metabolism; polyunsaturated fatty acid biosynthesis. In terms of biological role, can function as a Delta(5) fatty acid desaturase and behaves as a (8-3) desaturase. Introduces a double bond in the fatty acid chain 5 carbons away from carboxy terminal to biosynthesize polyunsaturated fatty acids (PUFAs) endogenously (PUFAs are essential for membrane structure and many cellular and physiological processes). Acts on a variety of substrates such as dihomo-gamma-linoleoyl-CoA ((8Z,11Z,14Z)-eicosatrienoyl-CoA, 20:3n-6) to generate arachidonoyl-CoA ((5Z,8Z,11Z,14Z)-eicosatetraenoyl-CoA, 20:4n-6). Also acts on a number of other substrates, including fatty acids that do not contain a double bond at the 8 position like (11Z,14Z,17Z)-eicosatrienoyl-CoA (20:3n-3) to produce (5Z,11Z,14Z,17Z)-eicosatetraenoyl-CoA (20:4n-3). Unlike plants, Caenorhabditis elegans desaturases seem to use fatty acyl-CoAs as substrates. This Caenorhabditis elegans protein is Delta(5) fatty acid desaturase fat-4 (fat-4).